The primary structure comprises 435 residues: Tol-Pal system protein TolB (435 aa).

The signal sequence occupies residues 1-24; it reads MIPMPKMIRSLLLLFCLLPLGAQA.

It belongs to the TolB family. The Tol-Pal system is composed of five core proteins: the inner membrane proteins TolA, TolQ and TolR, the periplasmic protein TolB and the outer membrane protein Pal. They form a network linking the inner and outer membranes and the peptidoglycan layer.

Its subcellular location is the periplasm. In terms of biological role, part of the Tol-Pal system, which plays a role in outer membrane invagination during cell division and is important for maintaining outer membrane integrity. This Thioalkalivibrio sulfidiphilus (strain HL-EbGR7) protein is Tol-Pal system protein TolB.